Reading from the N-terminus, the 1277-residue chain is NPC intracellular cholesterol transporter 1 (1277 aa).

Residues 1–22 (MSARGPAFGLLLLLLCPVQVFS) form the signal peptide. Over 23-269 (QSCVWYGECG…WRILGLDAMY (247 aa)) the chain is Lumenal. 9 disulfides stabilise this stretch: Cys-25-Cys-74, Cys-31-Cys-42, Cys-63-Cys-109, Cys-75-Cys-113, Cys-97-Cys-238, Cys-100-Cys-160, Cys-177-Cys-184, Cys-227-Cys-243, and Cys-240-Cys-247. Position 41 (Asn-41) interacts with cholesterol. Asn-70 carries N-linked (GlcNAc...) asparagine glycosylation. Gln-79 is a cholesterol binding site. Asn-122 and Asn-135 each carry an N-linked (GlcNAc...) asparagine glycan. Residues 175–205 (LLCGREAQACNATNWIEYMFNKDNGQAPFTI) form an important for cholesterol binding and cholesterol transfer from NPC1 to liposomes region. Asn-185 and Asn-222 each carry an N-linked (GlcNAc...) asparagine glycan. Residues 270–290 (VIMWSSYMAFLIVFFGAFFAV) form a helical membrane-spanning segment. Residues 291–350 (WCYRKRYFVSEYTPIDGNIAFSVNSSDKGQAFCCDPLGAAFERGLRRLFAQWGAFCVRHP) lie on the Cytoplasmic side of the membrane. The chain crosses the membrane as a helical span at residues 351-371 (GCVVFFSLAFIVACSSGLVFI). Topologically, residues 372 to 621 (RVTTDPVDLW…ELNRESNSDL (250 aa)) are lumenal. N-linked (GlcNAc...) asparagine glycans are attached at residues Asn-415, Asn-452, Asn-459, and Asn-478. 2 cysteine pairs are disulfide-bonded: Cys-468-Cys-479 and Cys-516-Cys-533. The 166-residue stretch at 620-785 (DLFTILISYA…ITCFVSLLGL (166 aa)) folds into the SSD domain. A helical membrane pass occupies residues 622-642 (FTILISYAIMFLYISIALGHI). The Cytoplasmic portion of the chain corresponds to 643 to 653 (KSCSRLLVDSK). The helical transmembrane segment at 654–674 (ISLGIAGILIVLSSVACSLGI) threads the bilayer. Residues 675-677 (FSY) lie on the Lumenal side of the membrane. A helical membrane pass occupies residues 678 to 698 (IGVPLTLIVIEVIPFLVLAVG). The Cytoplasmic portion of the chain corresponds to 699-734 (VDNIFILVQTYQRDERLQGETLDQQLGRVLGEVAPS). A helical transmembrane segment spans residues 735–755 (MFLSSFSETVAFFLGGLSVVP). The Lumenal portion of the chain corresponds to 756-759 (AVHT). The chain crosses the membrane as a helical span at residues 760 to 780 (FSLFAGMAVLIDFLLQITCFV). The Cytoplasmic portion of the chain corresponds to 781-832 (SLLGLDIKRQEKNRLDVVCCVQGAEDGAGVQASESCLFRFFKNSYAPLLLKD). The chain crosses the membrane as a helical span at residues 833 to 853 (WMRPIVIAVFVGVLSFSIAVL). The Lumenal portion of the chain corresponds to 854–1097 (NKVEIGLDQS…EQYLTVIDDT (244 aa)). N-linked (GlcNAc...) asparagine glycosylation is present at Asn-898. Cys-909 and Cys-914 are joined by a disulfide. Residues Asn-916, Asn-931, Asn-961, Asn-968, Asn-1028, and Asn-1063 are each glycosylated (N-linked (GlcNAc...) asparagine). 3 disulfides stabilise this stretch: Cys-956-Cys-1011, Cys-957-Cys-979, and Cys-967-Cys-976. A helical membrane pass occupies residues 1098–1118 (IFNLGVSLGAIFLVTVVLMGC). Residues 1119-1123 (ELWAT) are Cytoplasmic-facing. A helical transmembrane segment spans residues 1124–1144 (VIMCVTIAMILVNMFGVMWLW). Position 1145 (Gly-1145) is a topological domain, lumenal. Residues 1146–1166 (ISLNAVSLVNLVMSCGISVEF) traverse the membrane as a helical segment. Residues 1167 to 1194 (CSHITRAFTLSTKGSRVDRAEEALAHMG) are Cytoplasmic-facing. The chain crosses the membrane as a helical span at residues 1195 to 1215 (SSVFSGITLTKFGGIVVLAFA). Over 1216-1226 (KSQIFQIFYFR) the chain is Lumenal. Residues 1227-1247 (MYLAIVLLGATHGLIFLPVLL) form a helical membrane-spanning segment. Residues 1248 to 1277 (SYIGPSINKAKSLATQERYKGTEREQLLNF) are Cytoplasmic-facing. The required for location in lysosomes stretch occupies residues 1274-1277 (LLNF). A Di-leucine motif motif is present at residues 1274 to 1277 (LLNF).

Belongs to the patched family. In terms of assembly, interacts (via the second lumenal domain) with NPC2. Interacts with TMEM97; the interaction may decrease NPC1 availability to the cell. Interacts with TIM1. Interacts with SLC38A9; this interaction inhibits cholesterol-mediated mTORC1 activation via its sterol transport activity. Post-translationally, N-glycosylated. As to expression, detected in corpus luteum, granulosa cells and adrenal gland.

The protein localises to the late endosome membrane. The protein resides in the lysosome membrane. The enzyme catalyses cholesterol(in) = cholesterol(out). Its function is as follows. Intracellular cholesterol transporter which acts in concert with NPC2 and plays an important role in the egress of cholesterol from the endosomal/lysosomal compartment. Unesterified cholesterol that has been released from LDLs in the lumen of the late endosomes/lysosomes is transferred by NPC2 to the cholesterol-binding pocket in the N-terminal domain of NPC1. Cholesterol binds to NPC1 with the hydroxyl group buried in the binding pocket. Binds oxysterol with higher affinity than cholesterol. May play a role in vesicular trafficking in glia, a process that may be crucial for maintaining the structural and functional integrity of nerve terminals. Inhibits cholesterol-mediated mTORC1 activation throught its interaction with SLC38A9. The chain is NPC intracellular cholesterol transporter 1 from Sus scrofa (Pig).